The following is an 850-amino-acid chain: Adenylate cyclase (850 aa).

The catalytic stretch occupies residues 1–535 (MYLYIETLKQ…DISHHFPLRL (535 aa)). A regulatory region spans residues 541 to 850 (KALYSPCEIR…SLPTKQCQLH (310 aa)).

This sequence belongs to the adenylyl cyclase class-1 family.

It is found in the cytoplasm. It catalyses the reaction ATP = 3',5'-cyclic AMP + diphosphate. With respect to regulation, the regulatory domain is involved in the regulation of cyclase activity by the carbon source. The chain is Adenylate cyclase (cya) from Yersinia pestis.